Here is an 80-residue protein sequence, read N- to C-terminus: Exodeoxyribonuclease 7 small subunit (80 aa).

Belongs to the XseB family. As to quaternary structure, heterooligomer composed of large and small subunits.

Its subcellular location is the cytoplasm. The enzyme catalyses Exonucleolytic cleavage in either 5'- to 3'- or 3'- to 5'-direction to yield nucleoside 5'-phosphates.. Bidirectionally degrades single-stranded DNA into large acid-insoluble oligonucleotides, which are then degraded further into small acid-soluble oligonucleotides. This is Exodeoxyribonuclease 7 small subunit from Escherichia coli O6:K15:H31 (strain 536 / UPEC).